The primary structure comprises 326 residues: 3-oxopimeloyl-[acyl-carrier-protein] synthase (326 aa).

Catalysis depends on residues Cys115 and His253. Residues 254–258 form an ACP-binding region; the sequence is QANIR. Asn283 is an active-site residue.

Belongs to the thiolase-like superfamily. BioZ family.

The catalysed reaction is malonyl-[ACP] + an acyl-CoA + H(+) = a 3-oxoacyl-[ACP] + CO2 + CoA. It carries out the reaction glutaryl-CoA + malonyl-[ACP] + H(+) = 3-oxo-6-carboxyhexanoyl-[ACP] + CO2 + CoA. It functions in the pathway cofactor biosynthesis; biotin biosynthesis. Its function is as follows. Involved in the formation of the biotin precursor pimeloyl-ACP. Catalyzes the condensation of glutaryl-CoA, an intermediate in lysine degradation, with malonyl-ACP to produce 3-oxopimeloyl-ACP. The protein is 3-oxopimeloyl-[acyl-carrier-protein] synthase of Brucella abortus (strain 2308).